Consider the following 699-residue polypeptide: Proline-rich receptor-like protein kinase PERK7 (699 aa).

Residues 1 to 167 (MAEGQSPENS…TSNSGSNSSS (167 aa)) are disordered. Over 1–172 (MAEGQSPENS…SNSSSNDGLN (172 aa)) the chain is Extracellular. Composition is skewed to pro residues over residues 9–23 (NSPP…PSPP) and 43–68 (SPPP…PPLP). N-linked (GlcNAc...) asparagine glycosylation is present at Asn-70. Positions 100-121 (PPQQSDNNGNKGNNNENNKGND) are enriched in low complexity. Asn-131 carries an N-linked (GlcNAc...) asparagine glycan. The span at 148–158 (HSQPRSLAPPT) shows a compositional bias: polar residues. Asn-164 carries N-linked (GlcNAc...) asparagine glycosylation. The chain crosses the membrane as a helical span at residues 173–193 (IGAVIGLVAAAGILFIVMILL). Over 194–699 (CVCCFRKKKK…SKTTTTNRGI (506 aa)) the chain is Cytoplasmic. The residue at position 325 (Thr-325) is a Phosphothreonine. The Protein kinase domain maps to 336–615 (FSKDRLLGQG…VRTLEGDASL (280 aa)). ATP is bound by residues 342–350 (LGQGGFGYV) and Lys-364. A Phosphotyrosine modification is found at Tyr-410. The active-site Proton acceptor is Asp-461. Ser-465 and Ser-494 each carry phosphoserine. Phosphothreonine is present on residues Thr-495 and Thr-500. Tyr-508 is subject to Phosphotyrosine. Disordered regions lie at residues 609 to 639 (LEGD…DYEM) and 658 to 699 (DYGA…NRGI). Over residues 687–699 (GSTSKTTTTNRGI) the composition is skewed to polar residues.

It belongs to the protein kinase superfamily. Ser/Thr protein kinase family. As to expression, mostly expressed in flower buds.

The protein resides in the cell membrane. The enzyme catalyses L-seryl-[protein] + ATP = O-phospho-L-seryl-[protein] + ADP + H(+). The catalysed reaction is L-threonyl-[protein] + ATP = O-phospho-L-threonyl-[protein] + ADP + H(+). The polypeptide is Proline-rich receptor-like protein kinase PERK7 (PERK7) (Arabidopsis thaliana (Mouse-ear cress)).